The chain runs to 117 residues: Pre-mRNA-splicing factor ini1 (117 aa).

This sequence belongs to the PHF5 family.

It is found in the nucleus. In terms of biological role, required for pre-mRNA splicing. The chain is Pre-mRNA-splicing factor ini1 (ini1) from Schizosaccharomyces pombe (strain 972 / ATCC 24843) (Fission yeast).